Consider the following 95-residue polypeptide: Antitoxin VapB (95 aa).

In terms of biological role, antitoxin component of a type II toxin-antitoxin (TA) system. Partially neutralizes the RNase activity of cognate toxin VapC. This Rickettsia bellii (strain RML369-C) protein is Antitoxin VapB.